A 318-amino-acid polypeptide reads, in one-letter code: Esterase FVEG_12639 (318 aa).

Catalysis depends on residues Ser156, Asp255, and His285.

Belongs to the AB hydrolase 3 family.

Functionally, esterase; part of the Fusarium detoxification of benzoxazolinone cluster 2 (FDB2) involved in the degradation of benzoxazolinones produced by the host plant. Maize, wheat, and rye produce the 2 benzoxazinone phytoanticipins 2,4-dihy-droxy-7-methoxy-1,4-benzoxazin-3-one (DIMBOA) and 2,4-dihydroxy-1,4-benzoxazin-3-one (DIBOA) that, due to their inherent instability once released, spontaneously degrade to the more stable corresponding benzoxazolinones, 6-methoxy-2-benzoxazolinone (MBOA) and 2-benzoxazolinone (BOA), respectively. The first step in the detoxification of benzoxazolinones involves the hydrolysis of the cyclic ester bond of benzoxazolinones by the FDB1 cluster gamma-lactamase MBL1 to aminophenols. MBL1 is able to convert BOA into 2-aminophenol (2-AP), as well as MBOA into 5-methoxy-2-aminophenol (2-AMP). The FDB2 cluster N-malonyltransferase FDB2/NAT1 then metabolizes aminophenols via N-malonylation to non-toxic malonamic acids. FDB2/NAT1 converts 2-AP into N-(2-hydroxyphenyl) malonamic acid (HPMA) and 2-AMP into N-(2-hydroxy-4-methoxyphenyl) malonamic acid (HMPMA). The duplicated dienlactone hydrolases DLH1 and DLH2 may provide redundant function for hydrolyzing the lactone moiety in the BOA molecule. The roles of the amidases an other enzymes encoded by the 2 FDB clusters have not been identified so far. The chain is Esterase FVEG_12639 from Gibberella moniliformis (strain M3125 / FGSC 7600) (Maize ear and stalk rot fungus).